We begin with the raw amino-acid sequence, 446 residues long: MRFRIYKRKVLILTFVVAACGFVLWSSNGRQRKNEALAPPLLDAEPVRGAGARAGDHPAISVGIRRGSNDSAAPLVAAAPQPEVDNLTLRYRSLVYQLNFDQTLRNVDKVSSWVPRELVLVVQVHNRAEYLKLLLDSLRKAQGIDNVLVIFSHDFWSTEINQLIAGVDFCPVLQVFFPFSIQLYPNEFPGTDPRDCPRDLEKNAALKMGCINAEYPDSFGHYREAKFSQTKHHWWWKLHFVWERVKVLRDYAGLILFLEEDHYVAPDFYHVFKKMWNLKQQECPECDVLSLGTYTTVRSFRDVADKVDVKTWKSTEHNMGLALTRDAYQKLIECTDTFCTYDDYNWDWTLQYLTVSCLPKFWKVLVPQVPRIFHAGDCGMHHKKTCRPSTQSAQIESLLNSNKQYMFPETLTISEKLTAALSPPRKNGGWGDIRDHELCKSYRRLQ.

The Cytoplasmic portion of the chain corresponds to 1 to 9; the sequence is MRFRIYKRK. The chain crosses the membrane as a helical; Signal-anchor for type II membrane protein span at residues 10–29; it reads VLILTFVVAACGFVLWSSNG. Residues 30-446 are Lumenal-facing; sequence RQRKNEALAP…ELCKSYRRLQ (417 aa). N-linked (GlcNAc...) asparagine glycans are attached at residues asparagine 69 and asparagine 86. Residues 123–127 and aspartate 154 each bind substrate; that span reads QVHNR. A disulfide bridge connects residues cysteine 196 and cysteine 210. 229–233 contacts substrate; sequence QTKHH. Aspartate 261 lines the Mn(2+) pocket. Cysteine 283 and cysteine 286 are joined by a disulfide. Arginine 298 serves as a coordination point for substrate. 3 disulfides stabilise this stretch: cysteine 334–cysteine 357, cysteine 339–cysteine 439, and cysteine 378–cysteine 386. Position 374 (histidine 374) interacts with Mn(2+).

This sequence belongs to the glycosyltransferase 16 (GT16) protein family. Homodimer. The cofactor is Mn(2+).

The protein resides in the golgi apparatus membrane. The enzyme catalyses an N(4)-{beta-D-GlcNAc-(1-&gt;2)-alpha-D-Man-(1-&gt;3)-[alpha-D-Man-(1-&gt;6)]-beta-D-Man-(1-&gt;4)-beta-D-GlcNAc-(1-&gt;4)-beta-D-GlcNAc}-L-asparaginyl-[protein] + UDP-N-acetyl-alpha-D-glucosamine = N(4)-{beta-D-GlcNAc-(1-&gt;2)-alpha-D-Man-(1-&gt;3)-[beta-D-GlcNAc-(1-&gt;2)-alpha-D-Man-(1-&gt;6)]-beta-D-Man-(1-&gt;4)-beta-D-GlcNAc-(1-&gt;4)-beta-D-GlcNAc}-L-asparaginyl-[protein] + UDP + H(+). It participates in protein modification; protein glycosylation. In terms of biological role, plays an essential role in protein N-glycosylation. Catalyzes the transfer of N-acetylglucosamine (GlcNAc) onto the free terminal mannose moiety in the core structure of the nascent N-linked glycan chain, giving rise to the second branch in complex glycans. The polypeptide is Alpha-1,6-mannosyl-glycoprotein 2-beta-N-acetylglucosaminyltransferase (MGAT2) (Sus scrofa (Pig)).